We begin with the raw amino-acid sequence, 611 residues long: Mitochondrial import receptor subunit TOM70 (611 aa).

Ala-2 carries the N-acetylalanine modification. Topologically, residues 2–41 (AASKPIEAAMAAAAAPGSGNGVGGGGGTAGPGSGAGTLPR) are mitochondrial intermembrane. The helical transmembrane segment at 42–62 (WHVALAIGAPLLLGAGAMYLW) threads the bilayer. Topologically, residues 63–611 (SRRRRRREAG…KKYGLKPPTL (549 aa)) are cytoplasmic. Residues 69–110 (REAGGRGDASGLKRNSERKTPEGRASPALGSGHHDGSGDSLE) are disordered. An Omega-N-methylarginine modification is found at Arg-74. Phosphoserine occurs at positions 94, 99, 105, 108, and 113. TPR repeat units follow at residues 117–150 (AQAA…CPTE) and 156–189 (STFY…NPKY). Lys-188 is subject to N6-acetyllysine. Lys-278 participates in a covalent cross-link: Glycyl lysine isopeptide (Lys-Gly) (interchain with G-Cter in SUMO2). TPR repeat units follow at residues 297–330 (ENSG…QGKY), 332–365 (AEAL…KEAN), 370–403 (ANAL…DPMN), 404–437 (SDVY…RPKF), 445–478 (CFAL…FPRC), 479–512 (AEGY…EPDN), 514–547 (TTYV…DNKC), and 548–581 (DFAY…AKSE).

This sequence belongs to the Tom70 family. In terms of assembly, forms part of the preprotein translocase complex of the outer mitochondrial membrane (TOM complex) which consists of at least 7 different proteins (TOMM5, TOMM6, TOMM7, TOMM20, TOMM22, TOMM40 and TOMM70). Interacts with CAPN8. Interacts with TRADD, TRAF6 and STING. Interacts with MAVS. Interacts with HSPA8 and HSP90AA1; both interactions are required for preprotein mitochondrial import. The interaction with HSP90AA1 is direct and mediates the association of TOMM70 with IRF3 and TBK1. Upon mitochondrial depolarization, interacts with PINK1; the interaction is required for PINK1-TOM-TIM23 supercomplex formation which is critical for PINK1 stabilization at the outer mitochondrial membrane, kinase activation and downstream mitophagy. In terms of tissue distribution, expressed in the base region of the oxyntic and pyloric mucosae.

It is found in the mitochondrion outer membrane. Functionally, acts as a receptor of the preprotein translocase complex of the outer mitochondrial membrane (TOM complex). Recognizes and mediates the translocation of mitochondrial preproteins from the cytosol into the mitochondria in a chaperone dependent manner. Mediates TBK1 and IRF3 activation induced by MAVS in response to virus infection and promotes host antiviral responses during virus infection. The polypeptide is Mitochondrial import receptor subunit TOM70 (Mus musculus (Mouse)).